The primary structure comprises 501 residues: Probable histidine--tRNA ligase, mitochondrial (501 aa).

The tract at residues 32 to 54 (TNSNNNNNNNNNNNNNNNNNKNI) is disordered. Over residues 33–54 (NSNNNNNNNNNNNNNNNNNKNI) the composition is skewed to low complexity.

It belongs to the class-II aminoacyl-tRNA synthetase family.

It is found in the mitochondrion matrix. It catalyses the reaction tRNA(His) + L-histidine + ATP = L-histidyl-tRNA(His) + AMP + diphosphate + H(+). The sequence is that of Probable histidine--tRNA ligase, mitochondrial (mhisS) from Dictyostelium discoideum (Social amoeba).